Reading from the N-terminus, the 208-residue chain is Large ribosomal subunit protein uL4 (208 aa).

The interval 45-96 (RQGTHKSKTRAEVRGGGRKPYRQKGTGNARQGSTRSPLMVGGGTIFGPTPHG) is disordered. Residues 69 to 80 (GTGNARQGSTRS) are compositionally biased toward polar residues.

It belongs to the universal ribosomal protein uL4 family. Part of the 50S ribosomal subunit.

Functionally, one of the primary rRNA binding proteins, this protein initially binds near the 5'-end of the 23S rRNA. It is important during the early stages of 50S assembly. It makes multiple contacts with different domains of the 23S rRNA in the assembled 50S subunit and ribosome. In terms of biological role, forms part of the polypeptide exit tunnel. This chain is Large ribosomal subunit protein uL4, found in Chlorobium phaeovibrioides (strain DSM 265 / 1930) (Prosthecochloris vibrioformis (strain DSM 265)).